Consider the following 430-residue polypeptide: Dihydrolipoyllysine-residue acetyltransferase component of pyruvate dehydrogenase complex (430 aa).

The Lipoyl-binding domain occupies 2-77; the sequence is AFEFRLPDIG…VVGDVIVKID (76 aa). At lysine 43 the chain carries N6-lipoyllysine. Positions 80–122 are disordered; that stretch reads DAEDMQFKGHDDDSSSKEEPAKEEAPAEQAPVATQTEEVDENR. A compositionally biased stretch (basic and acidic residues) spans 84 to 104; it reads MQFKGHDDDSSSKEEPAKEEA. The Peripheral subunit-binding (PSBD) domain occupies 125–162; sequence KAMPSVRKYAREKGVNIKAVSGSGKNGRITKEDVDAYL. A disordered region spans residues 165 to 200; it reads GAPTASNESAASATSEEVAETPAAPAAVTLEGDFPE. Positions 166-193 are enriched in low complexity; the sequence is APTASNESAASATSEEVAETPAAPAAVT. The active site involves histidine 401.

This sequence belongs to the 2-oxoacid dehydrogenase family. Forms a 24-polypeptide structural core with octahedral symmetry. It depends on (R)-lipoate as a cofactor.

It catalyses the reaction N(6)-[(R)-dihydrolipoyl]-L-lysyl-[protein] + acetyl-CoA = N(6)-[(R)-S(8)-acetyldihydrolipoyl]-L-lysyl-[protein] + CoA. The pyruvate dehydrogenase complex catalyzes the overall conversion of pyruvate to acetyl-CoA and CO(2). It contains multiple copies of three enzymatic components: pyruvate dehydrogenase (E1), dihydrolipoamide acetyltransferase (E2) and lipoamide dehydrogenase (E3). This Staphylococcus aureus (strain COL) protein is Dihydrolipoyllysine-residue acetyltransferase component of pyruvate dehydrogenase complex (pdhC).